A 750-amino-acid chain; its full sequence is Photosystem I P700 chlorophyll a apoprotein A1 (750 aa).

Helical transmembrane passes span 70–93 (VFSAHFGQLAIIFVWLSGMYFHGA), 156–179 (LYCTAIGALIFATLMLFAGWFHYH), 195–219 (LNHHLAGLLGLGSLAWAGHQVHVSL), 291–309 (TVHHHLAIAVLFLVAGHMY), 346–369 (WHAQLALNLAMLGSLTIIVAHHMY), 385–411 (LSLFTHHMWIGGFLVVGAAAHAAIFMV), 433–455 (AIISHLNWVCIFLGFHSFGLYIH), and 531–549 (FLVHHIHAFTIHVTVLILL). Positions 573 and 582 each coordinate [4Fe-4S] cluster. 2 helical membrane passes run 589–610 (HVFLGLFWMYNSISIVIFHFSW) and 664–686 (LSAYGLLFLGAHFVWAFSLMFLF). H675 is a binding site for chlorophyll a'. The chlorophyll a site is built by M683 and Y691. W692 is a phylloquinone binding site. Residues 724–744 (AVGVAHYLLGGIATTWAFFLA) form a helical membrane-spanning segment.

Belongs to the PsaA/PsaB family. The PsaA/B heterodimer binds the P700 chlorophyll special pair and subsequent electron acceptors. PSI consists of a core antenna complex that captures photons, and an electron transfer chain that converts photonic excitation into a charge separation. The eukaryotic PSI reaction center is composed of at least 11 subunits. The cofactor is P700 is a chlorophyll a/chlorophyll a' dimer, A0 is one or more chlorophyll a, A1 is one or both phylloquinones and FX is a shared 4Fe-4S iron-sulfur center..

The protein resides in the plastid. Its subcellular location is the chloroplast thylakoid membrane. The enzyme catalyses reduced [plastocyanin] + hnu + oxidized [2Fe-2S]-[ferredoxin] = oxidized [plastocyanin] + reduced [2Fe-2S]-[ferredoxin]. In terms of biological role, psaA and PsaB bind P700, the primary electron donor of photosystem I (PSI), as well as the electron acceptors A0, A1 and FX. PSI is a plastocyanin-ferredoxin oxidoreductase, converting photonic excitation into a charge separation, which transfers an electron from the donor P700 chlorophyll pair to the spectroscopically characterized acceptors A0, A1, FX, FA and FB in turn. Oxidized P700 is reduced on the lumenal side of the thylakoid membrane by plastocyanin. This chain is Photosystem I P700 chlorophyll a apoprotein A1, found in Psilotum nudum (Whisk fern).